The following is a 427-amino-acid chain: Tol-Pal system protein TolB (427 aa).

Positions 1-23 (MKLLKRLVSVFAIVLAVGSNAFA) are cleaved as a signal peptide.

The protein belongs to the TolB family. In terms of assembly, the Tol-Pal system is composed of five core proteins: the inner membrane proteins TolA, TolQ and TolR, the periplasmic protein TolB and the outer membrane protein Pal. They form a network linking the inner and outer membranes and the peptidoglycan layer.

Its subcellular location is the periplasm. Functionally, part of the Tol-Pal system, which plays a role in outer membrane invagination during cell division and is important for maintaining outer membrane integrity. The chain is Tol-Pal system protein TolB from Haemophilus influenzae (strain PittGG).